A 327-amino-acid polypeptide reads, in one-letter code: MAEVGVLLLNLGGPDKQEDVRPFLYNLFADPEIIRIPVPPLQKPLAWLISTLRAPKSRKNYQAIGGGSPLRAITNQQGRVLKKALAARGLDIEVYVGMRYWHPFTEEAVRKIKADGIRRLVLLPLYPQYSISTSGSSFKLLDQIWARDPSLKAIERITINSWYSRPGYIRAMGERVREGLDKFDNPDGVHILFSAHGVPRTYVDQDGDPYQRQTEETVDLVMQSLGRPNAHSLAYQSRVGPVEWLKPYTEDTINELAQKGVRSLLAVPVSFISEHIETLQEIEIEYREVAEAAGIHDFRRAKALNVNKTFIDDLAEMVIENLGVYSR.

Fe cation-binding residues include H196 and E277.

The protein belongs to the ferrochelatase family.

It is found in the cytoplasm. It catalyses the reaction heme b + 2 H(+) = protoporphyrin IX + Fe(2+). It functions in the pathway porphyrin-containing compound metabolism; protoheme biosynthesis; protoheme from protoporphyrin-IX: step 1/1. Its function is as follows. Catalyzes the ferrous insertion into protoporphyrin IX. This chain is Ferrochelatase, found in Gloeobacter violaceus (strain ATCC 29082 / PCC 7421).